The following is a 353-amino-acid chain: MTEPLKPRIDFDGPLEVDQNPKFRAQQTFDENQAQNFAPATLDEAQEEEGQVEAVMDAALRPKRSLWRKMVMGGLALFGASVVGQGVQWTMNAWQTQDWVALGGCAAGALIIGAGVGSVVTEWRRLWRLRQRAHERDEARDLLHSHGTGKGRAFCEKLAQQAGIDQSHPALQRWYASIHETQNDREVVSLYAHLVQPVLDAQARREISRSAAESTLMIAVSPLALVDMAFIAWRNLRLINRIATLYGIELGYYSRLRLFKLVLLNIAFAGASELVREVGMDWMSQDLAARLSTRAAQGIGAGLLTARLGIKAMELCRPLPWIDDDKPRLGDFRRQLIGQVKETLQKGKTPSEK.

Helical transmembrane passes span 70–90 (MVMG…VQWT), 100–120 (VALG…GSVV), and 213–233 (ESTL…FIAW).

The protein belongs to the UPF0283 family.

It is found in the cell inner membrane. The chain is UPF0283 membrane protein YcjF from Escherichia coli O45:K1 (strain S88 / ExPEC).